Consider the following 227-residue polypeptide: Mitochondrial inner membrane protease ATP23 (227 aa).

His-124 lines the a divalent metal cation pocket. Glu-125 is a catalytic residue. His-128 provides a ligand contact to a divalent metal cation.

The protein belongs to the peptidase M76 family. In terms of assembly, interacts with ATP6.

Its subcellular location is the mitochondrion inner membrane. In terms of biological role, has a dual role in the assembly of mitochondrial ATPase. Acts as a protease that removes the N-terminal 10 residues of mitochondrial ATPase CF(0) subunit 6 (ATP6) at the intermembrane space side. Also involved in the correct assembly of the membrane-embedded ATPase CF(0) particle, probably mediating association of ATP6 with the subunit 9 ring. This Saccharomyces cerevisiae (strain YJM789) (Baker's yeast) protein is Mitochondrial inner membrane protease ATP23 (ATP23).